A 269-amino-acid polypeptide reads, in one-letter code: Eukaryotic translation initiation factor 3 subunit G-1 (269 aa).

The RRM domain occupies Ala-188–Pro-266.

It belongs to the eIF-3 subunit G family. Component of the eukaryotic translation initiation factor 3 (eIF-3) complex. The eIF-3 complex interacts with pix.

It is found in the cytoplasm. RNA-binding component of the eukaryotic translation initiation factor 3 (eIF-3) complex, which is involved in protein synthesis of a specialized repertoire of mRNAs and, together with other initiation factors, stimulates binding of mRNA and methionyl-tRNAi to the 40S ribosome. The eIF-3 complex specifically targets and initiates translation of a subset of mRNAs involved in cell proliferation. This subunit can bind 18S rRNA. This is Eukaryotic translation initiation factor 3 subunit G-1 from Drosophila erecta (Fruit fly).